The primary structure comprises 560 residues: Membrane protein insertase YidC (560 aa).

The helical transmembrane segment at 1 to 21 threads the bilayer; sequence MDIKRTILIAALAVVSYVMVL. The disordered stretch occupies residues 42-66; it reads VAPGLPDGVPAGNNGASADVPSANA. 5 helical membrane passes run 341–361, 367–387, 437–457, 468–488, and 515–535; these read LELT…FWLL, LLGN…GLFF, LGGC…YWVL, WILW…PIIM, and PIIF…YWVV.

The protein belongs to the OXA1/ALB3/YidC family. Type 1 subfamily. In terms of assembly, interacts with the Sec translocase complex via SecD. Specifically interacts with transmembrane segments of nascent integral membrane proteins during membrane integration.

It localises to the cell inner membrane. In terms of biological role, required for the insertion and/or proper folding and/or complex formation of integral membrane proteins into the membrane. Involved in integration of membrane proteins that insert both dependently and independently of the Sec translocase complex, as well as at least some lipoproteins. Aids folding of multispanning membrane proteins. This Pseudomonas putida (strain ATCC 700007 / DSM 6899 / JCM 31910 / BCRC 17059 / LMG 24140 / F1) protein is Membrane protein insertase YidC.